Here is a 422-residue protein sequence, read N- to C-terminus: Glycine amidinotransferase, mitochondrial (422 aa).

Residues M1 to Q37 constitute a mitochondrion transit peptide. Catalysis depends on residues D253 and H302. C406 (amidino-cysteine intermediate) is an active-site residue. A Phosphothreonine modification is found at T416.

It belongs to the amidinotransferase family. Homodimer.

Its subcellular location is the mitochondrion inner membrane. The enzyme catalyses L-arginine + glycine = guanidinoacetate + L-ornithine. It functions in the pathway amine and polyamine biosynthesis; creatine biosynthesis; creatine from L-arginine and glycine: step 1/2. Its function is as follows. Catalyzes the biosynthesis of guanidinoacetate, the immediate precursor of creatine. Creatine plays a vital role in energy metabolism in muscle tissues. May play a role in embryonic and central nervous system development. The sequence is that of Glycine amidinotransferase, mitochondrial from Gallus gallus (Chicken).